The chain runs to 530 residues: MQQALEQALDRAEYIVESAQQRPPKRKCLSSGRKSIFQKLYDLYVEECEKEPEVKKLRRNVNLLEKLVMQETLSCLVVNLYPGNEGYSLMLRGKNGSDSETIRLPYEEGELLEYLDAEELPPILVDLLEKSQVNIFHCGCVIAEIRDYRQSSNMKSPGYQSRHILLRPTMQTLVCDVHSITSDNHKWTQEDKLLLESQLILATAEPLCLDPSVAVACTANRLLYNRQKMNTRPMKRCLKRYSRSSLNRQQDLSHCPPPPQLRLLDFLQKRKERKAGQHYDLKISKAGNCVDMWKRSPCNLAVPSEVDVEKYAKVEKSIKSDDSQPTMWPAHDVKDDYVFECEGGNQYQKTKLTILQSLGDPLYYGKIQPWKADEESDSQMSPSHSSADDHSNWFIIGSKTDAERVVNQYQELVQNEAKCPVKMSHSSSGSASLNSGEEGEPETSSIQSSVLGKGVKHRPPPIKLPSSSGNSSSGNYFTAQQASSFLKSPTPPPPSSKPSLSRKSSVDLSQVSMLSPAALSPASSSQRHES.

Phosphoserine is present on Ser296. A disordered region spans residues 419-530 (CPVKMSHSSS…PASSSQRHES (112 aa)). Low complexity-rich tracts occupy residues 424-436 (SHSS…LNSG) and 466-475 (SSSGNSSSGN). Thr490 bears the Phosphothreonine mark. The segment covering 514–530 (LSPAALSPASSSQRHES) has biased composition (low complexity). 2 positions are modified to phosphoserine: Ser515 and Ser520.

It belongs to the SPT20 family. In terms of assembly, interacts with ATG9A. Interacts with MAPK14.

Required for MAP kinase p38 (MAPK11, MAPK12, MAPK13 and/or MAPK14) activation during gastrulation. Required for down-regulation of E-cadherin during gastrulation by regulating E-cadherin protein level downstream from NCK-interacting kinase (NIK) and independently of the regulation of transcription by FGF signaling and Snail. Required for starvation-induced ATG9A trafficking during autophagy. In Rattus norvegicus (Rat), this protein is Transcription factor SPT20 homolog (Supt20h).